Consider the following 335-residue polypeptide: POU domain, class 5, transcription factor 2 (335 aa).

The disordered stretch occupies residues 1-23 (MAGRRSSNVCPFPGNSGGGLEGP). In terms of domain architecture, POU-specific spans 113-187 (DVSAIQKEME…LLKMWLEEVD (75 aa)). Residues 205 to 264 (RKRRRASRERRIGSNLEKLFLQCPEPTPQQISYIAGRLRLQKDLVQVWFSNRSQMAGWPT) constitute a DNA-binding region (homeobox).

It belongs to the POU transcription factor family. Class-5 subfamily. As to expression, highly restricted to adult testis.

It is found in the nucleus. Transcription factor that binds preferentially to the octamer motif (5'-ATGTTAAT-3'). May exert a regulatory function in meiotic events that are required for terminal differentiation of male germ cell. The sequence is that of POU domain, class 5, transcription factor 2 (Pou5f2) from Rattus norvegicus (Rat).